The primary structure comprises 434 residues: Trigger factor (434 aa).

The PPIase FKBP-type domain occupies 161-246; the sequence is EDRVTVDFNG…LKKVEERELP (86 aa).

This sequence belongs to the FKBP-type PPIase family. Tig subfamily.

It localises to the cytoplasm. It catalyses the reaction [protein]-peptidylproline (omega=180) = [protein]-peptidylproline (omega=0). Functionally, involved in protein export. Acts as a chaperone by maintaining the newly synthesized protein in an open conformation. Functions as a peptidyl-prolyl cis-trans isomerase. This is Trigger factor from Proteus mirabilis (strain HI4320).